Reading from the N-terminus, the 145-residue chain is 3-hydroxyacyl-[acyl-carrier-protein] dehydratase FabZ (145 aa).

Residue His51 is part of the active site.

It belongs to the thioester dehydratase family. FabZ subfamily.

It localises to the cytoplasm. The enzyme catalyses a (3R)-hydroxyacyl-[ACP] = a (2E)-enoyl-[ACP] + H2O. In terms of biological role, involved in unsaturated fatty acids biosynthesis. Catalyzes the dehydration of short chain beta-hydroxyacyl-ACPs and long chain saturated and unsaturated beta-hydroxyacyl-ACPs. This is 3-hydroxyacyl-[acyl-carrier-protein] dehydratase FabZ from Staphylococcus saprophyticus subsp. saprophyticus (strain ATCC 15305 / DSM 20229 / NCIMB 8711 / NCTC 7292 / S-41).